A 373-amino-acid polypeptide reads, in one-letter code: StAR-related lipid transfer protein 7, mitochondrial (373 aa).

The transit peptide at 1 to 61 (MFPRRPPATL…YSESSRCALL (61 aa)) directs the protein to the mitochondrion. Positions 89–114 (DEERIQEEELQRSINEMKRLEEMSNI) form a coiled coil. One can recognise an START domain in the interval 115–330 (FQSSGVENYP…LHMATLKAKN (216 aa)). 2 disordered regions span residues 118–141 (SGVE…KDKE) and 347–373 (SSEA…IEYA).

Post-translationally, proteolytically cleaved by PARL. In terms of tissue distribution, expressed in epithelial cells of airways, peripheral bronchioles and alveoli, as well as in the basal cell layer of the epidermis (at protein level).

Its subcellular location is the mitochondrion. In terms of biological role, may play a protective role in mucosal tissues by preventing exaggerated allergic responses. The chain is StAR-related lipid transfer protein 7, mitochondrial (Stard7) from Mus musculus (Mouse).